Consider the following 236-residue polypeptide: Homeobox protein notochord (236 aa).

Positions 138–197 form a DNA-binding region, homeobox; the sequence is MKRIRTVFTPEQLEKLEKEFLKQQYMVGTERVDLASTLNLTETQVKVWFQNRRIKWRKQS. The tract at residues 209–236 is disordered; sequence GVIPADSSDHTDDSRETEEDEDDLDVEL. The span at 223–236 shows a compositional bias: acidic residues; it reads RETEEDEDDLDVEL.

As to expression, expressed throughout the embryo during pre-gastrula stages. Localized to the dorsal lip of the blastopore (Spemann organizer) during early gastrulation, after which expression continues in tissues derived from the organizer. Expressed in the notochord during mid-gastrulation. During neurulation, expressed in the notochord, archenteron roof and the prospective floor plate. Also expressed in the region that will become the epiphysis, the pineal body precursor. By the early tailbud stages, expression is limited to posterior notochord and floor plate before becoming restricted to the tip of the tail in the tadpole.

It is found in the nucleus. Transcriptional repressor. Plays a fundamental role in notochord formation, acting within the mesodermal region. This is Homeobox protein notochord (noto) from Xenopus laevis (African clawed frog).